Here is a 370-residue protein sequence, read N- to C-terminus: Probable dual-specificity RNA methyltransferase RlmN (370 aa).

Residue Glu91 is the Proton acceptor of the active site. The Radical SAM core domain occupies 97-329 (QHYGLSVCVT…KKNGVNCVVR (233 aa)). A disulfide bridge connects residues Cys104 and Cys340. 3 residues coordinate [4Fe-4S] cluster: Cys111, Cys115, and Cys118. Residues 163–164 (GE), Ser195, 218–220 (SLH), and Asn296 contribute to the S-adenosyl-L-methionine site. The active-site S-methylcysteine intermediate is Cys340.

Belongs to the radical SAM superfamily. RlmN family. It depends on [4Fe-4S] cluster as a cofactor.

It is found in the cytoplasm. It carries out the reaction adenosine(2503) in 23S rRNA + 2 reduced [2Fe-2S]-[ferredoxin] + 2 S-adenosyl-L-methionine = 2-methyladenosine(2503) in 23S rRNA + 5'-deoxyadenosine + L-methionine + 2 oxidized [2Fe-2S]-[ferredoxin] + S-adenosyl-L-homocysteine. The enzyme catalyses adenosine(37) in tRNA + 2 reduced [2Fe-2S]-[ferredoxin] + 2 S-adenosyl-L-methionine = 2-methyladenosine(37) in tRNA + 5'-deoxyadenosine + L-methionine + 2 oxidized [2Fe-2S]-[ferredoxin] + S-adenosyl-L-homocysteine. Its function is as follows. Specifically methylates position 2 of adenine 2503 in 23S rRNA and position 2 of adenine 37 in tRNAs. In Streptococcus suis (strain 98HAH33), this protein is Probable dual-specificity RNA methyltransferase RlmN.